A 311-amino-acid chain; its full sequence is Heme A synthase (311 aa).

Residues 1-6 (MQRFIK) lie on the Cytoplasmic side of the membrane. The helical transmembrane segment at 7-27 (WLAVITSLDLLVVLLGGALVT) threads the bilayer. The Extracellular segment spans residues 28-62 (KTGSGQGCGKSWPLCNGEFVPSNLSMETIIELSHR). A disulfide bond links C35 and C42. E58 is an active-site residue. Position 61 (H61) interacts with heme o. The chain crosses the membrane as a helical span at residues 63 to 83 (LTSGSAGILVTLLCILSWKYY). Residues 84–91 (KHVRETKT) are Cytoplasmic-facing. A helical membrane pass occupies residues 92–112 (LAILSFVFLVAQALMGAAAVV). Over 113–121 (WGQMPAVLA) the chain is Extracellular. A helical membrane pass occupies residues 122 to 142 (IHFGISLISFASVILLTCLIF). Residue H123 coordinates heme o. Residues 143–159 (EIDQKFDARSLIMDKKM) are Cytoplasmic-facing. A helical transmembrane segment spans residues 160–180 (KFHIYGVTIYSYIVVYTGALV). At 181–211 (RHERATLACPDFPLCSKSRPMPTQLHEWVQM) the chain is on the extracellular side. An intrachain disulfide couples C189 to C195. Residues 212 to 232 (GHRVAAMLIFAWILYAMIIAI) traverse the membrane as a helical segment. H213 provides a ligand contact to heme b. Residues 233–243 (RHYKQQRVVYW) lie on the Cytoplasmic side of the membrane. A helical transmembrane segment spans residues 244 to 264 (GWIISFILVTLQAIVGILVVF). Topologically, residues 265–271 (TNASLAM) are extracellular. The chain crosses the membrane as a helical span at residues 272–292 (ALLHSLFISCLFAVLCYLVMI). H275 provides a ligand contact to heme b. Residues 293-311 (GTRSTVNAKETESTSKQTK) lie on the Cytoplasmic side of the membrane.

Belongs to the COX15/CtaA family. Type 1 subfamily. In terms of assembly, interacts with CtaB. Heme b is required as a cofactor.

Its subcellular location is the cell membrane. It carries out the reaction Fe(II)-heme o + 2 A + H2O = Fe(II)-heme a + 2 AH2. It participates in porphyrin-containing compound metabolism; heme A biosynthesis; heme A from heme O: step 1/1. Catalyzes the conversion of heme O to heme A by two successive hydroxylations of the methyl group at C8. The first hydroxylation forms heme I, the second hydroxylation results in an unstable dihydroxymethyl group, which spontaneously dehydrates, resulting in the formyl group of heme A. This chain is Heme A synthase, found in Bacillus mycoides (strain KBAB4) (Bacillus weihenstephanensis).